We begin with the raw amino-acid sequence, 189 residues long: MIEVRKEIRIAGFGGQGVILAGIVLGKAASLYDGLYAVQTQSYGPEARGGASRAEVVISDHEIDYPKVQSPDILVAMSHQALLTYMDDLKRGGALIVDPDMVVEAEIEDFIRAREVKYFRAPATRTAEERVGITIVANMVMIGALTEATGIVSVRAAEEAIKDSVPPGTEEKNLMAFQAGRELIMEGSR.

As to quaternary structure, heterotetramer of the KorA, KorB, KorC and KorD subunits.

It catalyses the reaction 2 oxidized [2Fe-2S]-[ferredoxin] + 2-oxoglutarate + CoA = succinyl-CoA + 2 reduced [2Fe-2S]-[ferredoxin] + CO2 + H(+). The protein is 2-oxoglutarate synthase subunit KorC (korC) of Methanothermobacter thermautotrophicus (strain ATCC 29096 / DSM 1053 / JCM 10044 / NBRC 100330 / Delta H) (Methanobacterium thermoautotrophicum).